Consider the following 562-residue polypeptide: Arginine--tRNA ligase (562 aa).

Residues 129–139 carry the 'HIGH' region motif; the sequence is ANPTGPLHVGH.

This sequence belongs to the class-I aminoacyl-tRNA synthetase family. In terms of assembly, monomer.

The protein localises to the cytoplasm. It carries out the reaction tRNA(Arg) + L-arginine + ATP = L-arginyl-tRNA(Arg) + AMP + diphosphate. The chain is Arginine--tRNA ligase from Xanthomonas oryzae pv. oryzae (strain MAFF 311018).